Consider the following 292-residue polypeptide: Zinc finger protein OZF (292 aa).

10 C2H2-type zinc fingers span residues 16–38 (FACK…EHFH), 44–66 (FECN…QSTH), 72–94 (FECS…QKIH), 100–122 (FECK…QRTH), 128–150 (FICK…EKIH), 156–178 (FKCN…QNIH), 184–206 (YECN…VRIH), 212–234 (YECN…VRSH), 240–262 (YGCN…LRIH), and 268–290 (YQCS…QKIH). Glycyl lysine isopeptide (Lys-Gly) (interchain with G-Cter in SUMO2) cross-links involve residues K28, K51, and K56. Glycyl lysine isopeptide (Lys-Gly) (interchain with G-Cter in SUMO) cross-links involve residues K157 and K169. K173 participates in a covalent cross-link: Glycyl lysine isopeptide (Lys-Gly) (interchain with G-Cter in SUMO2). The tract at residues 212–292 (YECNVCGKAF…HIRHQKIHTH (81 aa)) is interaction with TERF2IP.

It belongs to the krueppel C2H2-type zinc-finger protein family. Binds DNA. Interacts with SUMO conjugating enzyme UBC9/UBE2I. Interacts with the telomeric protein TERF2IP. In terms of tissue distribution, expressed in heart, brain, liver, lung, skeletal muscle and kidney, and at much lower level in spleen and testicle. Expressed in lactating mammary gland.

Its subcellular location is the nucleus. The polypeptide is Zinc finger protein OZF (Znf146) (Mus musculus (Mouse)).